The primary structure comprises 428 residues: Histidinol dehydrogenase (428 aa).

Residues tyrosine 129, glutamine 188, and asparagine 211 each contribute to the NAD(+) site. Residues serine 234, glutamine 256, and histidine 259 each coordinate substrate. Zn(2+)-binding residues include glutamine 256 and histidine 259. Active-site proton acceptor residues include glutamate 323 and histidine 324. The substrate site is built by histidine 324, aspartate 357, glutamate 411, and histidine 416. Aspartate 357 lines the Zn(2+) pocket. Position 416 (histidine 416) interacts with Zn(2+).

Belongs to the histidinol dehydrogenase family. Requires Zn(2+) as cofactor.

The catalysed reaction is L-histidinol + 2 NAD(+) + H2O = L-histidine + 2 NADH + 3 H(+). Its pathway is amino-acid biosynthesis; L-histidine biosynthesis; L-histidine from 5-phospho-alpha-D-ribose 1-diphosphate: step 9/9. Its function is as follows. Catalyzes the sequential NAD-dependent oxidations of L-histidinol to L-histidinaldehyde and then to L-histidine. The chain is Histidinol dehydrogenase from Caulobacter vibrioides (strain ATCC 19089 / CIP 103742 / CB 15) (Caulobacter crescentus).